A 140-amino-acid chain; its full sequence is Ribosome maturation factor RimP (140 aa).

It belongs to the RimP family.

Its subcellular location is the cytoplasm. In terms of biological role, required for maturation of 30S ribosomal subunits. The protein is Ribosome maturation factor RimP of Campylobacter hominis (strain ATCC BAA-381 / DSM 21671 / CCUG 45161 / LMG 19568 / NCTC 13146 / CH001A).